Here is a 334-residue protein sequence, read N- to C-terminus: GTP 3',8-cyclase (334 aa).

In terms of domain architecture, Radical SAM core spans 13-239; that stretch reads RFHRKFYYLR…KVKAVNDGPA (227 aa). A GTP-binding site is contributed by Arg-22. Residues Cys-29 and Cys-33 each contribute to the [4Fe-4S] cluster site. S-adenosyl-L-methionine is bound at residue Tyr-35. Residue Cys-36 participates in [4Fe-4S] cluster binding. Arg-73 is a GTP binding site. Gly-77 is a binding site for S-adenosyl-L-methionine. Residue Thr-104 coordinates GTP. Ser-128 is an S-adenosyl-L-methionine binding site. A GTP-binding site is contributed by Lys-165. Met-199 provides a ligand contact to S-adenosyl-L-methionine. The [4Fe-4S] cluster site is built by Cys-262 and Cys-265. 267–269 is a GTP binding site; sequence RLR. Cys-279 serves as a coordination point for [4Fe-4S] cluster.

This sequence belongs to the radical SAM superfamily. MoaA family. In terms of assembly, monomer and homodimer. [4Fe-4S] cluster is required as a cofactor.

It catalyses the reaction GTP + AH2 + S-adenosyl-L-methionine = (8S)-3',8-cyclo-7,8-dihydroguanosine 5'-triphosphate + 5'-deoxyadenosine + L-methionine + A + H(+). It functions in the pathway cofactor biosynthesis; molybdopterin biosynthesis. Functionally, catalyzes the cyclization of GTP to (8S)-3',8-cyclo-7,8-dihydroguanosine 5'-triphosphate. The protein is GTP 3',8-cyclase of Vibrio atlanticus (strain LGP32) (Vibrio splendidus (strain Mel32)).